The primary structure comprises 508 residues: Photosystem II CP47 reaction center protein (508 aa).

6 helical membrane-spanning segments follow: residues Ala-21–Ser-36, Ile-101–Trp-115, Gly-140–Phe-156, Ile-203–Ser-218, Val-237–Val-252, and Ser-457–Arg-472.

Belongs to the PsbB/PsbC family. PsbB subfamily. In terms of assembly, PSII is composed of 1 copy each of membrane proteins PsbA, PsbB, PsbC, PsbD, PsbE, PsbF, PsbH, PsbI, PsbJ, PsbK, PsbL, PsbM, PsbT, PsbX, PsbY, PsbZ, Psb30/Ycf12, at least 3 peripheral proteins of the oxygen-evolving complex and a large number of cofactors. It forms dimeric complexes. Requires Binds multiple chlorophylls. PSII binds additional chlorophylls, carotenoids and specific lipids. as cofactor.

The protein localises to the plastid. Its subcellular location is the chloroplast thylakoid membrane. Its function is as follows. One of the components of the core complex of photosystem II (PSII). It binds chlorophyll and helps catalyze the primary light-induced photochemical processes of PSII. PSII is a light-driven water:plastoquinone oxidoreductase, using light energy to abstract electrons from H(2)O, generating O(2) and a proton gradient subsequently used for ATP formation. This chain is Photosystem II CP47 reaction center protein, found in Nandina domestica (Heavenly bamboo).